The following is a 135-amino-acid chain: Race-specific elicitor A4 (135 aa).

Residues 1 to 18 (MHYTTLLLSTLLVGTALA) form the signal peptide. The propeptide occupies 19-29 (QPTNPPAKTPK). The tract at residues 19–39 (QPTNPPAKTPKKAPKTQPYNP) is disordered. One can recognise a Chitin-binding type-2 domain in the interval 47–111 (DTKCMGPKDC…DYPNLSTCPV (65 aa)). Cysteine 86 and cysteine 101 form a disulfide bridge. The interval 112–135 (KTPQPKPKKGGVGGKKASVGHPGY) is disordered.

Its function is as follows. This necrosis-inducing peptide induces a hypersensitive response on Cf-4 tomato genotypes. Race-specific elicitors are compounds which only induce defense responses in genotypes of host plants which are resistant to the pathogenic race that produces the elicitor, but not in susceptible genotypes. The protein is Race-specific elicitor A4 (AVR4) of Passalora fulva (Tomato leaf mold).